We begin with the raw amino-acid sequence, 100 residues long: FGLGGVGGLGVGGLGVGGLGAVPGAVGLGGVSPAAAAKAAKFGAAGLGGVLGAGRPFPIGGGAGGLGVGGKPPKPFGGALGALGFPGGACLGKSCGRKRK.

Proline 72 and proline 86 each carry 4-hydroxyproline. A disulfide bridge connects residues cysteine 90 and cysteine 95.

Belongs to the elastin family. As to quaternary structure, the polymeric elastin chains are cross-linked together into an extensible 3D network. Forms a ternary complex with BGN and MFAP2. Interacts with MFAP2 via divalent cations (calcium &gt; magnesium &gt; manganese) in a dose-dependent and saturating manner. Interacts with FBLN5 and FBN1. Forms a ternary complex with FBN1 and FBLN2 or FBLN5. Interacts with MFAP4 in a Ca (2+)-dependent manner; this interaction promotes ELN self-assembly. Interacts with EFEMP2 with moderate affinity. Post-translationally, elastin is formed through the cross-linking of its soluble precursor tropoelastin. Cross-linking is initiated through the action of lysyl oxidase on exposed lysines to form allysine. Subsequent spontaneous condensation reactions with other allysine or unmodified lysine residues result in various bi-, tri-, and tetrafunctional cross-links. The most abundant cross-links in mature elastin fibers are lysinonorleucine, allysine aldol, desmosine, and isodesmosine. In terms of processing, hydroxylation on proline residues within the sequence motif, GXPG, is most likely to be 4-hydroxy as this fits the requirement for 4-hydroxylation in vertebrates.

It is found in the secreted. The protein resides in the extracellular space. Its subcellular location is the extracellular matrix. Functionally, major structural protein of tissues such as aorta and nuchal ligament, which must expand rapidly and recover completely. Molecular determinant of the late arterial morphogenesis, stabilizing arterial structure by regulating proliferation and organization of vascular smooth muscle. This chain is Elastin (ELN), found in Ovis aries (Sheep).